The primary structure comprises 157 residues: Protein TIFY 8 (157 aa).

In terms of domain architecture, Tify spans 33–68 (VPGTTEQLTIFYSGSMVKFDNVPREKIRYACRLRRL). The disordered stretch occupies residues 126–147 (SIGAQRTGTPPSRRRIHARGKS). A compositionally biased stretch (basic residues) spans 137–147 (SRRRIHARGKS).

It belongs to the TIFY/JAZ family. Post-translationally, ubiquitinated. Targeted for degradation by the SCF(COI1) E3 ubiquitin ligase-proteasome pathway during jasmonate signaling.

Repressor of jasmonate responses. The sequence is that of Protein TIFY 8 from Oryza sativa subsp. japonica (Rice).